Reading from the N-terminus, the 388-residue chain is Succinate--CoA ligase [ADP-forming] subunit beta (388 aa).

Residues 9 to 244 (KSLFAEYGLP…PSQDDAREAH (236 aa)) form the ATP-grasp domain. ATP contacts are provided by residues Lys-46, 53-55 (GRG), Glu-99, Thr-102, and Glu-107. 2 residues coordinate Mg(2+): Asn-199 and Asp-213. Residues Asn-264 and 321 to 323 (GIV) each bind substrate.

The protein belongs to the succinate/malate CoA ligase beta subunit family. As to quaternary structure, heterotetramer of two alpha and two beta subunits. Mg(2+) is required as a cofactor.

It catalyses the reaction succinate + ATP + CoA = succinyl-CoA + ADP + phosphate. It carries out the reaction GTP + succinate + CoA = succinyl-CoA + GDP + phosphate. Its pathway is carbohydrate metabolism; tricarboxylic acid cycle; succinate from succinyl-CoA (ligase route): step 1/1. Succinyl-CoA synthetase functions in the citric acid cycle (TCA), coupling the hydrolysis of succinyl-CoA to the synthesis of either ATP or GTP and thus represents the only step of substrate-level phosphorylation in the TCA. The beta subunit provides nucleotide specificity of the enzyme and binds the substrate succinate, while the binding sites for coenzyme A and phosphate are found in the alpha subunit. This chain is Succinate--CoA ligase [ADP-forming] subunit beta, found in Shewanella putrefaciens (strain CN-32 / ATCC BAA-453).